The sequence spans 637 residues: Phospholipase B (637 aa).

The first 19 residues, 1–19 (MSIITTAFALSLLATTAFA), serve as a signal peptide directing secretion. One can recognise a PLA2c domain in the interval 46–572 (DCPSNVTWIR…DTWCWAGDDN (527 aa)). N-linked (GlcNAc...) asparagine glycosylation is found at Asn-50, Asn-56, Asn-122, Asn-231, Asn-246, Asn-272, Asn-314, Asn-343, Asn-387, Asn-433, Asn-481, Asn-501, Asn-528, Asn-553, Asn-572, Asn-594, and Asn-606.

The protein belongs to the lysophospholipase family. Post-translationally, N-glycosylated.

It is found in the secreted. The catalysed reaction is a 1-acyl-sn-glycero-3-phosphocholine + H2O = sn-glycerol 3-phosphocholine + a fatty acid + H(+). In terms of biological role, exhibits phospholipase B (PLB), lysophospholipase (LPL) and lysophospholipase/transacylase (LPTA) activities. This chain is Phospholipase B (PLB1), found in Cryptococcus neoformans var. neoformans serotype D (strain B-3501A) (Filobasidiella neoformans).